The following is a 947-amino-acid chain: Bifunctional glutamine synthetase adenylyltransferase/adenylyl-removing enzyme (947 aa).

Residues Met-1–Glu-440 form an adenylyl removase region. Residues Ser-450–Val-947 are adenylyl transferase.

This sequence belongs to the GlnE family. Requires Mg(2+) as cofactor.

The catalysed reaction is [glutamine synthetase]-O(4)-(5'-adenylyl)-L-tyrosine + phosphate = [glutamine synthetase]-L-tyrosine + ADP. The enzyme catalyses [glutamine synthetase]-L-tyrosine + ATP = [glutamine synthetase]-O(4)-(5'-adenylyl)-L-tyrosine + diphosphate. In terms of biological role, involved in the regulation of glutamine synthetase GlnA, a key enzyme in the process to assimilate ammonia. When cellular nitrogen levels are high, the C-terminal adenylyl transferase (AT) inactivates GlnA by covalent transfer of an adenylyl group from ATP to specific tyrosine residue of GlnA, thus reducing its activity. Conversely, when nitrogen levels are low, the N-terminal adenylyl removase (AR) activates GlnA by removing the adenylyl group by phosphorolysis, increasing its activity. The regulatory region of GlnE binds the signal transduction protein PII (GlnB) which indicates the nitrogen status of the cell. In Salmonella paratyphi B (strain ATCC BAA-1250 / SPB7), this protein is Bifunctional glutamine synthetase adenylyltransferase/adenylyl-removing enzyme.